A 22-amino-acid chain; its full sequence is thr operon leader peptide (22 aa).

Belongs to the thr operon leader peptide family.

This protein is involved in control of the biosynthesis of threonine. The chain is thr operon leader peptide from Yersinia pestis bv. Antiqua (strain Antiqua).